The primary structure comprises 215 residues: Sodium channel regulatory subunit beta-3 (215 aa).

The first 22 residues, 1-22, serve as a signal peptide directing secretion; the sequence is MPAFNRLFPLVSLVLIYWASVC. The Extracellular segment spans residues 23–156; sequence FPVCVEVPSE…EEAGEDFTSV (134 aa). The region spanning 24–138 is the Ig-like C2-type domain; sequence PVCVEVPSET…EAHRPFVKTT (115 aa). 2 disulfide bridges follow: C26-C48 and C45-C120. N95, N109, N113, and N121 each carry an N-linked (GlcNAc...) asparagine glycan. Residues 157–178 form a helical membrane-spanning segment; sequence VSEIMMYILLVFLTLWLLIEMI. The Cytoplasmic segment spans residues 179–215; the sequence is YCYRKVSKAEEAAQENASDYLAIPSENKENSAVPVEE.

It belongs to the sodium channel auxiliary subunit SCN3B (TC 8.A.17) family. As to quaternary structure, a voltage-gated sodium (Nav) channel consists of an ion-conducting pore-forming alpha subunit functional on its own that is regulated by one or more beta subunits. Forms homodimers and homotrimers. SCN3B is non-covalently associated with alpha subunits and induces the formation of alpha subunit oligomers, including trimers. Interacts with SCN5A/Nav1.5; regulatory subunit of SCN5A/Nav1.5. Interacts with SCN7A/Nav2.1; probable regulatory subunit of SCN7A/Nav2.1. Interacts with SCN10A; regulatory subunit of SCN10A/Nav1.8. Interacts with NFASC; probably involved in targeting the sodium channels to the nodes of Ranvier. In terms of processing, intramolecular disulfide bonds favor the voltage-gated sodium channel oligomeric complex assembly. N-glycosylated.

Its subcellular location is the cell membrane. Regulatory subunit of multiple voltage-gated sodium (Nav) channels directly mediating the depolarization of excitable membranes. Navs, also called VGSCs (voltage-gated sodium channels) or VDSCs (voltage-dependent sodium channels), operate by switching between closed and open conformations depending on the voltage difference across the membrane. In the open conformation they allow Na(+) ions to selectively pass through the pore, along their electrochemical gradient. The influx of Na+ ions provokes membrane depolarization, initiating the propagation of electrical signals throughout cells and tissues. The accessory beta subunits participate in localization and functional modulation of the Nav channels. Modulates the activity of SCN2A/Nav1.2, causing a hyperpolarizing shift in the voltage-dependence of inactivation of the channel and increasing the fraction of channels operating in the fast gating mode. Modulates the activity of SCN5A/Nav1.5. Could also regulate the atypical sodium channel SCN7A/Nav2.1. Modulates the activity of SCN10A/Nav1.8, regulating its oligomerization and accelerating the recovery from inactivation. The protein is Sodium channel regulatory subunit beta-3 of Macaca fascicularis (Crab-eating macaque).